The chain runs to 250 residues: Anamorsin homolog 1 (250 aa).

Positions 1–104 (MNLKITINQQ…KKLNIPQQEF (104 aa)) are N-terminal SAM-like domain. Positions 104-149 (FNNCYGKYDYIEQKFQNQINFFKQVDINGKQEIIDENELLDDGVQV) are linker. [2Fe-2S] cluster contacts are provided by Cys155, Cys162, Cys165, and Cys167. Residues 155 to 167 (CASKPRACANCTC) are fe-S binding site A. The [4Fe-4S] cluster site is built by Cys193, Cys196, Cys204, and Cys207. 2 consecutive short sequence motifs (cx2C motif) follow at residues 193-196 (CGSC) and 204-207 (CANC). Residues 193–207 (CGSCYLGDAFRCANC) form a fe-S binding site B region.

The protein belongs to the anamorsin family. In terms of assembly, monomer. [2Fe-2S] cluster is required as a cofactor. [4Fe-4S] cluster serves as cofactor.

It localises to the cytoplasm. It is found in the mitochondrion intermembrane space. Component of the cytosolic iron-sulfur (Fe-S) protein assembly (CIA) machinery. Required for the maturation of extramitochondrial Fe-S proteins. Part of an electron transfer chain functioning in an early step of cytosolic Fe-S biogenesis, facilitating the de novo assembly of a [4Fe-4S] cluster on the cytosolic Fe-S scaffold complex. Electrons are transferred from NADPH via a FAD- and FMN-containing diflavin oxidoreductase. Together with the diflavin oxidoreductase, also required for the assembly of the diferric tyrosyl radical cofactor of ribonucleotide reductase (RNR), probably by providing electrons for reduction during radical cofactor maturation in the catalytic small subunit. The sequence is that of Anamorsin homolog 1 from Paramecium tetraurelia.